The following is a 314-amino-acid chain: Olfactory receptor 5P66 (314 aa).

The Extracellular segment spans residues 1-28 (MAFLENGNHTAVSEFILLGLTDDPVLRI). N-linked (GlcNAc...) asparagine glycosylation occurs at asparagine 8. The helical transmembrane segment at 29 to 49 (VLFTIILCIYLVTVSGNLSTI) threads the bilayer. The Cytoplasmic portion of the chain corresponds to 50–57 (LLIRVSSQ). The helical transmembrane segment at 58–78 (LHHPMYFFLSHLASADIGLSS) threads the bilayer. The Extracellular segment spans residues 79–102 (SVTPNMLVNFLVERSTISYLGCGI). Cysteine 100 and cysteine 192 form a disulfide bridge. A helical membrane pass occupies residues 103–123 (QLSSAALFGATECFLLAAMAY). Residues 124–136 (DRFMAICNPLLYS) lie on the Cytoplasmic side of the membrane. A helical membrane pass occupies residues 137-157 (TKMSTKVCVQLIVGSYIAGFL). Residues 158–199 (NASSFLLSFFSLLFCGQNIINDFFCDFAPLAELSCSDVSVFV) are Extracellular-facing. Residues 200 to 220 (VVISFSAGTVTMLTVFVIAIS) form a helical membrane-spanning segment. Topologically, residues 221–240 (YSYILITILKMRSTEGRQKA) are cytoplasmic. Residues 241 to 261 (FSTCTSHLTAVTLFYGTVTFI) form a helical membrane-spanning segment. The Extracellular portion of the chain corresponds to 262-274 (YVMPKSSYSMDQN). Residues 275-295 (KIISVFYMVVVPMLNPLIYSL) traverse the membrane as a helical segment. Over 296-314 (RNNEIKGALKRHFDRKTFS) the chain is Cytoplasmic.

The protein belongs to the G-protein coupled receptor 1 family.

The protein resides in the cell membrane. Its function is as follows. Potential odorant receptor. The protein is Olfactory receptor 5P66 of Mus musculus (Mouse).